Here is a 317-residue protein sequence, read N- to C-terminus: MHNYLDFEKPISDLEGKIIELKKLASEDESIDTTDEIGRLEVRVREAIVEIYSKLNAWQKTQVARHPQRPHFVDYAKTLFQEFTPLAGDRKFSEDAAIQAGLARFRGQPVAVIGQEKGNDTKSRLKHNFGSPRPEGYRKAIRILEMADRFGLPVISLVDTAGAYPGVGAEERGQAEAIARSTEMCLGVKVPLVSVVIGEGGSGGAIAIATGNRVYMLEHSIYSVISPEGAASILWRDSTRAREAATNMKITAEDLKSLGVIDGIISEPLGGAHRDPDSVIAATGDVIANALGEMASRSGEQLRNERRQKFLNMGRNL.

The 254-residue stretch at 40-293 folds into the CoA carboxyltransferase C-terminal domain; it reads LEVRVREAIV…GDVIANALGE (254 aa).

The protein belongs to the AccA family. In terms of assembly, acetyl-CoA carboxylase is a heterohexamer composed of biotin carboxyl carrier protein (AccB), biotin carboxylase (AccC) and two subunits each of ACCase subunit alpha (AccA) and ACCase subunit beta (AccD).

It is found in the cytoplasm. It carries out the reaction N(6)-carboxybiotinyl-L-lysyl-[protein] + acetyl-CoA = N(6)-biotinyl-L-lysyl-[protein] + malonyl-CoA. The protein operates within lipid metabolism; malonyl-CoA biosynthesis; malonyl-CoA from acetyl-CoA: step 1/1. In terms of biological role, component of the acetyl coenzyme A carboxylase (ACC) complex. First, biotin carboxylase catalyzes the carboxylation of biotin on its carrier protein (BCCP) and then the CO(2) group is transferred by the carboxyltransferase to acetyl-CoA to form malonyl-CoA. In Rhizobium etli (strain ATCC 51251 / DSM 11541 / JCM 21823 / NBRC 15573 / CFN 42), this protein is Acetyl-coenzyme A carboxylase carboxyl transferase subunit alpha.